A 177-amino-acid chain; its full sequence is Parathyroid hormone-related protein (177 aa).

The N-terminal stretch at 1-24 (MQRRLVQQWSVAVFLLSYAVPSCG) is a signal peptide. Positions 25–34 (RSVEGLSRRL) are excised as a propeptide. The segment at 57–68 (RFFLHHLIAEIH) is important for receptor binding. Residues 74-177 (ATSEVSPNSK…TSLELDSRRH (104 aa)) are disordered. Residues 76–90 (SEVSPNSKPSPNTKN) are compositionally biased toward polar residues. The Nuclear localization signal signature appears at 108–129 (TNKVETYKEQPLKTPGKKKKGK). A compositionally biased stretch (basic and acidic residues) spans 109-118 (NKVETYKEQP). Residues 122–132 (PGKKKKGKPGK) show a composition bias toward basic residues.

It belongs to the parathyroid hormone family. Interacts with PTH1R (via N-terminal extracellular domain). In terms of processing, there are 3 principal secretory forms, called PTHrP[1-36], PTHrP[38-94], and osteostatin (PTHrP[107-139]) arising from endoproteolytic cleavage of the initial translation product. Each of these secretory forms is believed to have one or more of its own receptors that mediates the normal paracrine, autocrine and endocrine actions. As to expression, ubiquitous. Also expressed in the mammary gland.

The protein resides in the secreted. Its subcellular location is the cytoplasm. It localises to the nucleus. Its function is as follows. Neuroendocrine peptide which is a critical regulator of cellular and organ growth, development, migration, differentiation and survival and of epithelial calcium ion transport. Acts by binding to its receptor, PTH1R, activating G protein-coupled receptor signaling. Regulates endochondral bone development and epithelial-mesenchymal interactions during the formation of the mammary glands and teeth. Required for skeletal homeostasis. Promotes mammary mesenchyme differentiation and bud outgrowth by modulating mesenchymal cell responsiveness to BMPs. Up-regulates BMPR1A expression in the mammary mesenchyme and this increases the sensitivity of these cells to BMPs and allows them to respond to BMP4 in a paracrine and/or autocrine fashion. BMP4 signaling in the mesenchyme, in turn, triggers epithelial outgrowth and augments MSX2 expression, which causes the mammary mesenchyme to inhibit hair follicle formation within the nipple sheath. Promotes colon cancer cell migration and invasion in an integrin alpha-6/beta-1-dependent manner through activation of Rac1. Functionally, potent inhibitor of osteoclastic bone resorption. This chain is Parathyroid hormone-related protein, found in Homo sapiens (Human).